Here is a 214-residue protein sequence, read N- to C-terminus: Ribonuclease HII (214 aa).

The RNase H type-2 domain occupies 26-214 (EIVCGVDEAG…PVRAALDLIR (189 aa)). Asp-32, Glu-33, and Asp-124 together coordinate a divalent metal cation.

The protein belongs to the RNase HII family. Mn(2+) serves as cofactor. Requires Mg(2+) as cofactor.

The protein localises to the cytoplasm. It carries out the reaction Endonucleolytic cleavage to 5'-phosphomonoester.. Endonuclease that specifically degrades the RNA of RNA-DNA hybrids. The protein is Ribonuclease HII of Burkholderia orbicola (strain MC0-3).